A 227-amino-acid polypeptide reads, in one-letter code: Large ribosomal subunit protein uL3 (227 aa).

The interval 129–154 is disordered; the sequence is GMQPVSHGQSDRTRSRGSSGAQGPQK.

It belongs to the universal ribosomal protein uL3 family. Part of the 50S ribosomal subunit. Forms a cluster with proteins L14 and L19.

Functionally, one of the primary rRNA binding proteins, it binds directly near the 3'-end of the 23S rRNA, where it nucleates assembly of the 50S subunit. In Endomicrobium trichonymphae, this protein is Large ribosomal subunit protein uL3.